A 549-amino-acid chain; its full sequence is MSAKYIFVTGGVVSSLGKGLAAASIGCLLEARGLRVNLMKFDPYLNVDPGTMSPFQHGEVFVTDDGAETDLDLGHYERFTHARLTRDNNLTTGRIYEQIITKERRGDYLGKTVQVIPHVTNEIKNAMRKVAADGDVTIVEIGGTVGDIESLPFLEAIRQMRQELGRENTVFVHVTLVPWISAAQELKTKPTQHSVKEMLSIGIQPDILLCRTDRYLPHDIKSKIALFCNLEEKAVITAKDVDSIYEVPLVFAQEGVDKLALRYLHLDTREPDLSRWSALVERCYHPTGEVSIGIVGKYVEYEDSYKSLKEALVHGALAEGLKLRVTWIEAEGLEAPNYEQQLSGFDGILVPGGFGKRGVEGMLNAIRYARENKVPYFGICLGMQTACIEFARNVCGLQGANSSEFDPATPHRIIYKLRELTGVEEMGGTMRLGAWACVLQNGSLAADAYGKTEISERHRHRYEFNREYEAVLTGAGLRISGTTPDSTYVEIVEIPDHPYFLGCQFHPEFKSKPLEPHPLFHAFVKAAYQNHKPHTEATQPAAESAPIGK.

Positions 1-266 are amidoligase domain; the sequence is MSAKYIFVTG…DKLALRYLHL (266 aa). S14 contacts CTP. S14 is a binding site for UTP. ATP-binding positions include 15–20 and D72; that span reads SLGKGL. 2 residues coordinate Mg(2+): D72 and E140. CTP-binding positions include 147-149, 187-192, and K223; these read DIE and KTKPTQ. UTP-binding positions include 187-192 and K223; that span reads KTKPTQ. An ATP-binding site is contributed by 239–241; the sequence is KDV. The Glutamine amidotransferase type-1 domain maps to 291-533; the sequence is SIGIVGKYVE…VKAAYQNHKP (243 aa). L-glutamine is bound at residue G353. The Nucleophile; for glutamine hydrolysis role is filled by C380. L-glutamine-binding positions include 381–384, E404, and R461; that span reads LGMQ. Active-site residues include H506 and E508.

The protein belongs to the CTP synthase family. As to quaternary structure, homotetramer.

It catalyses the reaction UTP + L-glutamine + ATP + H2O = CTP + L-glutamate + ADP + phosphate + 2 H(+). The catalysed reaction is L-glutamine + H2O = L-glutamate + NH4(+). The enzyme catalyses UTP + NH4(+) + ATP = CTP + ADP + phosphate + 2 H(+). The protein operates within pyrimidine metabolism; CTP biosynthesis via de novo pathway; CTP from UDP: step 2/2. Its activity is regulated as follows. Allosterically activated by GTP, when glutamine is the substrate; GTP has no effect on the reaction when ammonia is the substrate. The allosteric effector GTP functions by stabilizing the protein conformation that binds the tetrahedral intermediate(s) formed during glutamine hydrolysis. Inhibited by the product CTP, via allosteric rather than competitive inhibition. Functionally, catalyzes the ATP-dependent amination of UTP to CTP with either L-glutamine or ammonia as the source of nitrogen. Regulates intracellular CTP levels through interactions with the four ribonucleotide triphosphates. The polypeptide is CTP synthase (Acidobacterium capsulatum (strain ATCC 51196 / DSM 11244 / BCRC 80197 / JCM 7670 / NBRC 15755 / NCIMB 13165 / 161)).